A 432-amino-acid chain; its full sequence is Mannose-6-phosphate isomerase 1 (432 aa).

At Met-1 the chain carries N-acetylmethionine. 4 residues coordinate Zn(2+): Gln-124, His-126, Glu-151, and His-288. The active site involves Arg-307.

This sequence belongs to the mannose-6-phosphate isomerase type 1 family. Zn(2+) serves as cofactor. As to expression, constitutively expressed in both vegetative and reproductive organs under normal growth conditions (at protein level).

It catalyses the reaction D-mannose 6-phosphate = D-fructose 6-phosphate. The protein operates within nucleotide-sugar biosynthesis; GDP-alpha-D-mannose biosynthesis; alpha-D-mannose 1-phosphate from D-fructose 6-phosphate: step 1/2. With respect to regulation, inhibited by EDTA, Zn(2+), Cd(2+), Co(2+), p-chloromercuribenzoate and L-ascorbic acid (AsA). Phosphomannose isomerase involved in the synthesis of the GDP-mannose and dolichol-phosphate-mannose required for a number of critical mannosyl transfer reactions. Involved in the ascorbic acid (AsA) biosynthesis. Required during the endosperm development. This Arabidopsis thaliana (Mouse-ear cress) protein is Mannose-6-phosphate isomerase 1 (PMI1).